The primary structure comprises 1331 residues: X-linked retinitis pigmentosa GTPase regulator-interacting protein 1 (1331 aa).

Disordered regions lie at residues 1–165 (MQHL…PPAF), 183–220 (SQLTHTMTTDSTHVEEIPRSPEKTSKVEKPEQRSSEEC), and 351–374 (HQPLDSSHQPHWSTELTGKQLPPQ). The segment covering 41 to 67 (NQKELNCRRLHLHEEPTLVKEPSPKQR) has biased composition (basic and acidic residues). 2 stretches are compositionally biased toward polar residues: residues 77-86 (VQRSTTTQPD) and 183-193 (SQLTHTMTTDS). Over residues 194–220 (THVEEIPRSPEKTSKVEKPEQRSSEEC) the composition is skewed to basic and acidic residues. 2 coiled-coil regions span residues 236–352 (ELIR…SSHQ) and 498–546 (MCYQ…LRSH). Over residues 351–367 (HQPLDSSHQPHWSTELT) the composition is skewed to polar residues. Residues 745–870 (GARKVQSNES…AQNKSIKGDF (126 aa)) form the C2 domain. 2 disordered regions span residues 899-1057 (FQMS…VQDK) and 1088-1146 (AEDG…SDDI). Residues 908–999 (EGEEKEEEGG…DVLEASFTEE (92 aa)) adopt a coiled-coil conformation. The span at 910 to 988 (EEKEEEGGEE…EEEEEEEDEN (79 aa)) shows a compositional bias: acidic residues. 2 stretches are compositionally biased toward basic and acidic residues: residues 1022–1039 (PEKRKPPVIAEKKEREHQ) and 1088–1115 (AEDGGLKAQDKREEPPSPRSALRQEHPS). Over residues 1129–1141 (CEQASEVSETQTT) the composition is skewed to polar residues. Residues 1136–1326 (SETQTTDSDD…ALHGIYKEMT (191 aa)) form an interaction with RPGR region.

Belongs to the RPGRIP1 family. Interacts with NPHP4. Interacts with NEK4. Forms homodimers and elongated homopolymers. Interacts with RPGR. Interacts with SPATA7. Interacts with CEP290/NPHP6; mediating the association between RPGR and CEP290/NPHP6. As to expression, expressed in the retina (at protein level).

The protein localises to the cell projection. Its subcellular location is the cilium. Functionally, may function as scaffolding protein. Required for normal location of RPGR at the connecting cilium of photoreceptor cells. Required for normal disk morphogenesis and disk organization in the outer segment of photoreceptor cells and for survival of photoreceptor cells. This Mus musculus (Mouse) protein is X-linked retinitis pigmentosa GTPase regulator-interacting protein 1 (Rpgrip1).